An 805-amino-acid polypeptide reads, in one-letter code: DNA gyrase subunit B (805 aa).

One can recognise a Toprim domain in the interval 435–550 (SEIFIVEGDS…RGYIYIAQPP (116 aa)). Residues Glu441, Asp515, and Asp517 each coordinate Mg(2+).

It belongs to the type II topoisomerase GyrB family. As to quaternary structure, heterotetramer, composed of two GyrA and two GyrB chains. In the heterotetramer, GyrA contains the active site tyrosine that forms a transient covalent intermediate with DNA, while GyrB binds cofactors and catalyzes ATP hydrolysis. The cofactor is Mg(2+). Mn(2+) is required as a cofactor. Ca(2+) serves as cofactor.

It localises to the cytoplasm. The enzyme catalyses ATP-dependent breakage, passage and rejoining of double-stranded DNA.. Its function is as follows. A type II topoisomerase that negatively supercoils closed circular double-stranded (ds) DNA in an ATP-dependent manner to modulate DNA topology and maintain chromosomes in an underwound state. Negative supercoiling favors strand separation, and DNA replication, transcription, recombination and repair, all of which involve strand separation. Also able to catalyze the interconversion of other topological isomers of dsDNA rings, including catenanes and knotted rings. Type II topoisomerases break and join 2 DNA strands simultaneously in an ATP-dependent manner. This is DNA gyrase subunit B from Caulobacter vibrioides (strain ATCC 19089 / CIP 103742 / CB 15) (Caulobacter crescentus).